The following is a 762-amino-acid chain: Protein PHTF1 (762 aa).

A PHTF domain is found at 6–150 (RDAISWYQKK…VHCQIVSTQI (145 aa)). Transmembrane regions (helical) follow at residues 77–97 (GLVR…VTSL), 99–119 (IFVW…LYLM), and 121–141 (PIVS…MGTV). The interval 152–184 (RPSGNNGNRRRRKLRKTVNGDGTRDNGNNSPDK) is disordered. Residues N179 and N224 are each glycosylated (N-linked (GlcNAc...) asparagine). Residues S272, S276, S277, S334, and S336 each carry the phosphoserine modification. The disordered stretch occupies residues 345–415 (AAFSQGSRSG…NTLHSGTKRD (71 aa)). A compositionally biased stretch (low complexity) spans 348–364 (SQGSRSGMSGGSRSLNL). N363 carries an N-linked (GlcNAc...) asparagine glycan. Residues 365 to 376 (SRRDSESTRHDS) show a composition bias toward basic and acidic residues. A glycan (N-linked (GlcNAc...) asparagine) is linked at N431. 4 consecutive transmembrane segments (helical) span residues 473–493 (GVGY…FPFL), 515–535 (TLFC…INFF), 611–631 (VVVS…CAQV), and 645–665 (WEFL…ASLG). N-linked (GlcNAc...) asparagine glycans are attached at residues N674 and N733. The chain crosses the membrane as a helical span at residues 737–757 (VVILSAVSGVISDLLGFNIRL).

As to quaternary structure, interacts with FEM1B. Highly expressed in testis.

It is found in the endoplasmic reticulum membrane. Its subcellular location is the golgi apparatus. It localises to the cis-Golgi network membrane. This Rattus norvegicus (Rat) protein is Protein PHTF1.